The chain runs to 96 residues: Co-chaperonin GroES (96 aa).

This sequence belongs to the GroES chaperonin family. Heptamer of 7 subunits arranged in a ring. Interacts with the chaperonin GroEL.

The protein resides in the cytoplasm. Functionally, together with the chaperonin GroEL, plays an essential role in assisting protein folding. The GroEL-GroES system forms a nano-cage that allows encapsulation of the non-native substrate proteins and provides a physical environment optimized to promote and accelerate protein folding. GroES binds to the apical surface of the GroEL ring, thereby capping the opening of the GroEL channel. The protein is Co-chaperonin GroES of Haemophilus influenzae (strain PittEE).